We begin with the raw amino-acid sequence, 262 residues long: 3-methyl-2-oxobutanoate hydroxymethyltransferase (262 aa).

Mg(2+) is bound by residues aspartate 44 and aspartate 83. 3-methyl-2-oxobutanoate-binding positions include 44–45 (DS), aspartate 83, and lysine 111. Residue glutamate 113 participates in Mg(2+) binding. Glutamate 180 (proton acceptor) is an active-site residue.

This sequence belongs to the PanB family. As to quaternary structure, homodecamer; pentamer of dimers. Mg(2+) serves as cofactor.

The protein resides in the cytoplasm. It catalyses the reaction 3-methyl-2-oxobutanoate + (6R)-5,10-methylene-5,6,7,8-tetrahydrofolate + H2O = 2-dehydropantoate + (6S)-5,6,7,8-tetrahydrofolate. The protein operates within cofactor biosynthesis; (R)-pantothenate biosynthesis; (R)-pantoate from 3-methyl-2-oxobutanoate: step 1/2. Its function is as follows. Catalyzes the reversible reaction in which hydroxymethyl group from 5,10-methylenetetrahydrofolate is transferred onto alpha-ketoisovalerate to form ketopantoate. The sequence is that of 3-methyl-2-oxobutanoate hydroxymethyltransferase from Alcanivorax borkumensis (strain ATCC 700651 / DSM 11573 / NCIMB 13689 / SK2).